The following is a 308-amino-acid chain: Elongation factor Ts (308 aa).

Positions 80-83 (TDFV) are involved in Mg(2+) ion dislocation from EF-Tu.

It belongs to the EF-Ts family.

The protein localises to the cytoplasm. Functionally, associates with the EF-Tu.GDP complex and induces the exchange of GDP to GTP. It remains bound to the aminoacyl-tRNA.EF-Tu.GTP complex up to the GTP hydrolysis stage on the ribosome. The polypeptide is Elongation factor Ts (Rhizobium leguminosarum bv. trifolii (strain WSM2304)).